We begin with the raw amino-acid sequence, 550 residues long: Glucose-6-phosphate isomerase (550 aa).

Glutamate 356 acts as the Proton donor in catalysis. Active-site residues include histidine 387 and lysine 515.

This sequence belongs to the GPI family.

Its subcellular location is the cytoplasm. It catalyses the reaction alpha-D-glucose 6-phosphate = beta-D-fructose 6-phosphate. It functions in the pathway carbohydrate biosynthesis; gluconeogenesis. The protein operates within carbohydrate degradation; glycolysis; D-glyceraldehyde 3-phosphate and glycerone phosphate from D-glucose: step 2/4. In terms of biological role, catalyzes the reversible isomerization of glucose-6-phosphate to fructose-6-phosphate. This is Glucose-6-phosphate isomerase from Aliivibrio salmonicida (strain LFI1238) (Vibrio salmonicida (strain LFI1238)).